Consider the following 367-residue polypeptide: Glutamate 5-kinase (367 aa).

ATP is bound at residue Lys-10. The substrate site is built by Ser-50, Asp-137, and Asn-149. ATP-binding positions include 169-170 (TD) and 211-217 (TGGMSTK). The PUA domain occupies 275–353 (AGEITVDEGA…QEIDAILGYE (79 aa)).

The protein belongs to the glutamate 5-kinase family.

The protein localises to the cytoplasm. It carries out the reaction L-glutamate + ATP = L-glutamyl 5-phosphate + ADP. Its pathway is amino-acid biosynthesis; L-proline biosynthesis; L-glutamate 5-semialdehyde from L-glutamate: step 1/2. Functionally, catalyzes the transfer of a phosphate group to glutamate to form L-glutamate 5-phosphate. The polypeptide is Glutamate 5-kinase (Escherichia coli O81 (strain ED1a)).